The following is a 459-amino-acid chain: FBD-associated F-box protein At4g13985 (459 aa).

Positions 18–64 (VDRLRNLPDCLLFKILLNLPTKDVVKLSVLSRRWRNVWRYVPGLDLE) constitute an F-box domain. The 55-residue stretch at 375–429 (KEGANILPGPRRFLTSLEYVKIAKPMAAEASEIKLKLVSYFLENSTILKKLTLCL) folds into the FBD domain.

The sequence is that of FBD-associated F-box protein At4g13985 from Arabidopsis thaliana (Mouse-ear cress).